A 410-amino-acid polypeptide reads, in one-letter code: Lissencephaly-1 homolog (410 aa).

The LisH domain maps to Gln7–Met39. Residues Thr56–Gly82 are a coiled coil. WD repeat units follow at residues Gly106–Lys147, Gly148–Thr187, Gly190–Thr229, Gly232–Glu271, Glu274–Thr333, Gly336–Asn377, and His379–Arg410.

It belongs to the WD repeat LIS1/nudF family. As to quaternary structure, can self-associate. Component of the cytosolic PAF-AH (I) heterotetrameric enzyme, which is composed of PAFAH1B1 (beta), PAFAH1B2 (alpha2) and PAFAH1B3 (alpha1) subunits. The catalytic activity of the enzyme resides in the alpha1 (PAFAH1B3) and alpha2 (PAFAH1B2) subunits, whereas the beta subunit (PAFAH1B1) has regulatory activity. Trimer formation is not essential for the catalytic activity. Interacts with dynein, dynactin, nde1 and ndel1.

It is found in the cytoplasm. The protein resides in the cytoskeleton. The protein localises to the microtubule organizing center. It localises to the centrosome. In terms of biological role, regulatory subunit (beta subunit) of the cytosolic type I platelet-activating factor (PAF) acetylhydrolase (PAF-AH (I)), an enzyme that catalyzes the hydrolyze of the acetyl group at the sn-2 position of PAF and its analogs and participates in the PAF inactivation. Positively regulates the activity of the minus-end directed microtubule motor protein dynein. May enhance dynein-mediated microtubule sliding by targeting dynein to the microtubule plus end. Required for several dynein- and microtubule-dependent processes such as the maintenance of Golgi integrity, the peripheral transport of microtubule fragments and the coupling of the nucleus and centrosome. May be required for proliferation of neuronal precursors and neuronal migration. The sequence is that of Lissencephaly-1 homolog (pafah1b1) from Xenopus tropicalis (Western clawed frog).